Reading from the N-terminus, the 193-residue chain is MADILLLDNVDSFTYNLVDQLRASGHQVVIYRNQIGAEVIIERLQHMEQPVLMLSPGPGTPSEAGCMPELLQRLRGQLPIIGICLGHQAIVEAYGGQVGQAGEILHGKASAIAHDGEGMFAGMANPLPVARYHSLVGSNIPADLTVNARSGEMVMAVRDDRRRVCGFQFHPESILTTHGARLLEQTLAWALAK.

The Glutamine amidotransferase type-1 domain occupies 3–193 (DILLLDNVDS…EQTLAWALAK (191 aa)). 57 to 59 (GPG) provides a ligand contact to L-glutamine. Cysteine 84 functions as the Nucleophile; for GATase activity in the catalytic mechanism. Residues glutamine 88 and 134–135 (SL) contribute to the L-glutamine site. Active-site for GATase activity residues include histidine 170 and glutamate 172.

In terms of assembly, heterotetramer consisting of two non-identical subunits: a beta subunit (TrpG) and a large alpha subunit (TrpE).

It carries out the reaction chorismate + L-glutamine = anthranilate + pyruvate + L-glutamate + H(+). Its pathway is amino-acid biosynthesis; L-tryptophan biosynthesis; L-tryptophan from chorismate: step 1/5. Functionally, part of a heterotetrameric complex that catalyzes the two-step biosynthesis of anthranilate, an intermediate in the biosynthesis of L-tryptophan. In the first step, the glutamine-binding beta subunit (TrpG) of anthranilate synthase (AS) provides the glutamine amidotransferase activity which generates ammonia as a substrate that, along with chorismate, is used in the second step, catalyzed by the large alpha subunit of AS (TrpE) to produce anthranilate. In the absence of TrpG, TrpE can synthesize anthranilate directly from chorismate and high concentrations of ammonia. The chain is Anthranilate synthase component 2 (trpG) from Serratia marcescens.